The chain runs to 284 residues: Mevalonate kinase (284 aa).

An ATP-binding site is contributed by 86–96 (PIGSGLGSSAA). The Proton acceptor role is filled by aspartate 137.

The protein belongs to the GHMP kinase family. Mevalonate kinase subfamily. In terms of assembly, homodimer. Mg(2+) serves as cofactor.

It localises to the cytoplasm. It carries out the reaction (R)-mevalonate + ATP = (R)-5-phosphomevalonate + ADP + H(+). It participates in isoprenoid biosynthesis; isopentenyl diphosphate biosynthesis via mevalonate pathway; isopentenyl diphosphate from (R)-mevalonate: step 1/3. Functionally, catalyzes the phosphorylation of (R)-mevalonate (MVA) to (R)-mevalonate 5-phosphate (MVAP). Functions in the mevalonate (MVA) pathway leading to isopentenyl diphosphate (IPP), a key precursor for the biosynthesis of isoprenoid compounds such as archaeal membrane lipids. The polypeptide is Mevalonate kinase (Archaeoglobus fulgidus (strain ATCC 49558 / DSM 4304 / JCM 9628 / NBRC 100126 / VC-16)).